The chain runs to 339 residues: GTPase Obg (339 aa).

The Obg domain maps to 1–158; the sequence is MKFLDQVDLR…RDLTFELKLM (158 aa). 2 disordered regions span residues 66–86 and 125–148; these read FAED…GEDK and GNAF…PGEE. The span at 72-86 shows a compositional bias: basic and acidic residues; that stretch reads PGGRREQTGASGEDK. Polar residues predominate over residues 129–138; it reads FKSSTNQAPR. An OBG-type G domain is found at 159–329; sequence ADVGLVGFPN…LKYTLFDTVH (171 aa). Residues 165-172, 190-194, 212-215, 279-282, and 310-312 contribute to the GTP site; these read GFPNAGKS, FTTLT, DIPG, SKID, and SAV. Mg(2+) contacts are provided by Ser172 and Thr192.

This sequence belongs to the TRAFAC class OBG-HflX-like GTPase superfamily. OBG GTPase family. In terms of assembly, monomer. Requires Mg(2+) as cofactor.

The protein localises to the cytoplasm. Its function is as follows. An essential GTPase which binds GTP, GDP and possibly (p)ppGpp with moderate affinity, with high nucleotide exchange rates and a fairly low GTP hydrolysis rate. Plays a role in control of the cell cycle, stress response, ribosome biogenesis and in those bacteria that undergo differentiation, in morphogenesis control. This is GTPase Obg from Salinibacter ruber (strain DSM 13855 / M31).